A 539-amino-acid polypeptide reads, in one-letter code: T-complex protein 1 subunit delta (539 aa).

Positions 1 to 28 are disordered; the sequence is MPENVASRSGPPAAGPGNRGKGAYQDRD. At Arg19 the chain carries Omega-N-methylarginine. Lys21 carries the N6-acetyllysine modification. Ser36 is subject to Phosphoserine. ADP is bound at residue Gly53. Gly53 is an ATP binding site. Asp104 lines the Mg(2+) pocket. 7 residues coordinate ADP: Gly105, Thr106, Thr107, Ser108, Asn172, Ser173, and Lys174. ATP-binding residues include Gly105 and Thr106. ATP is bound at residue Lys174. 2 positions are modified to phosphoserine: Ser184 and Ser202. Lys288, Lys302, Lys319, and Lys326 each carry N6-acetyllysine. Gly425 contributes to the ADP binding site. Phosphoserine is present on Ser444. An ADP-binding site is contributed by Gln510.

It belongs to the TCP-1 chaperonin family. Component of the chaperonin-containing T-complex (TRiC), a hexadecamer composed of two identical back-to-back stacked rings enclosing a protein folding chamber. Each ring is made up of eight different subunits: TCP1/CCT1, CCT2, CCT3, CCT4, CCT5, CCT6A/CCT6, CCT7, CCT8. Interacts with PACRG. Interacts with DNAAF4. Interacts with DLEC1.

It is found in the cytoplasm. The protein localises to the melanosome. The protein resides in the cytoskeleton. It localises to the microtubule organizing center. Its subcellular location is the centrosome. It is found in the cilium basal body. It carries out the reaction ATP + H2O = ADP + phosphate + H(+). In terms of biological role, component of the chaperonin-containing T-complex (TRiC), a molecular chaperone complex that assists the folding of actin, tubulin and other proteins upon ATP hydrolysis. The TRiC complex mediates the folding of WRAP53/TCAB1, thereby regulating telomere maintenance. As part of the TRiC complex may play a role in the assembly of BBSome, a complex involved in ciliogenesis regulating transports vesicles to the cilia. The polypeptide is T-complex protein 1 subunit delta (Cct4) (Rattus norvegicus (Rat)).